A 354-amino-acid polypeptide reads, in one-letter code: Uroporphyrinogen decarboxylase (354 aa).

Substrate is bound by residues 27–31 (RQAGR), aspartate 77, tyrosine 154, serine 209, and histidine 327.

The protein belongs to the uroporphyrinogen decarboxylase family. As to quaternary structure, homodimer.

It localises to the cytoplasm. The enzyme catalyses uroporphyrinogen III + 4 H(+) = coproporphyrinogen III + 4 CO2. The protein operates within porphyrin-containing compound metabolism; protoporphyrin-IX biosynthesis; coproporphyrinogen-III from 5-aminolevulinate: step 4/4. Functionally, catalyzes the decarboxylation of four acetate groups of uroporphyrinogen-III to yield coproporphyrinogen-III. The sequence is that of Uroporphyrinogen decarboxylase from Shewanella baltica (strain OS223).